A 141-amino-acid polypeptide reads, in one-letter code: Ribonuclease VapC2 (141 aa).

Residues 7 to 129 (LIDKSALVRL…FDAIAALTGQ (123 aa)) enclose the PINc domain. The Mg(2+) site is built by D99, D117, and D119.

This sequence belongs to the PINc/VapC protein family. As to quaternary structure, probably active as a homodimer. Requires Mg(2+) as cofactor.

Its function is as follows. Toxic component of a type II toxin-antitoxin (TA) system. Acts as an RNase. All its toxic effects are neutralized by coexpression with cognate antitoxin VapB2. This Mycobacterium tuberculosis (strain CDC 1551 / Oshkosh) protein is Ribonuclease VapC2.